A 248-amino-acid chain; its full sequence is Probable transcriptional regulatory protein RL3983 (248 aa).

It belongs to the TACO1 family.

It localises to the cytoplasm. The polypeptide is Probable transcriptional regulatory protein RL3983 (Rhizobium johnstonii (strain DSM 114642 / LMG 32736 / 3841) (Rhizobium leguminosarum bv. viciae)).